The primary structure comprises 446 residues: Phosphoglucosamine mutase (446 aa).

The active-site Phosphoserine intermediate is Ser102. Residues Ser102, Asp239, Asp241, and Asp243 each contribute to the Mg(2+) site. At Ser102 the chain carries Phosphoserine.

The protein belongs to the phosphohexose mutase family. Requires Mg(2+) as cofactor. Activated by phosphorylation.

It carries out the reaction alpha-D-glucosamine 1-phosphate = D-glucosamine 6-phosphate. Functionally, catalyzes the conversion of glucosamine-6-phosphate to glucosamine-1-phosphate. This Solibacter usitatus (strain Ellin6076) protein is Phosphoglucosamine mutase.